The primary structure comprises 613 residues: Penicillin-binding protein activator LpoA (613 aa).

The N-terminal stretch at 1-29 (MNSMLNFTHKRKSVSRLLAPVALAVILAG) is a signal peptide. Residue cysteine 30 is the site of N-palmitoyl cysteine attachment. Residue cysteine 30 is the site of S-diacylglycerol cysteine attachment.

Belongs to the LpoA family. In terms of assembly, interacts with PBP1a.

It localises to the cell outer membrane. Functionally, regulator of peptidoglycan synthesis that is essential for the function of penicillin-binding protein 1A (PBP1a). The sequence is that of Penicillin-binding protein activator LpoA from Photobacterium profundum (strain SS9).